The chain runs to 204 residues: Putative AgrB-like protein (204 aa).

4 consecutive transmembrane segments (helical) span residues 52–74 (YGIA…YLWL), 87–107 (LNCT…FQNI), 111–131 (NWIV…FAPA), and 156–176 (LILT…LIMV).

This sequence belongs to the AgrB family.

It localises to the cell membrane. In terms of biological role, may be involved in the proteolytic processing of a quorum sensing system signal molecule precursor. The protein is Putative AgrB-like protein of Listeria monocytogenes serotype 4b (strain CLIP80459).